The following is a 370-amino-acid chain: 2-oxoisovalerate dehydrogenase subunit beta, mitochondrial (370 aa).

Residues 1 to 25 (MLRGNNIKKVNSLLVRSFHSTVGNR) constitute a mitochondrion transit peptide. Tyr-130 provides a ligand contact to thiamine diphosphate. K(+) contacts are provided by Gly-156, Leu-158, Thr-159, and Glu-209.

Heterotetramer of 2 alpha and 2 beta chains. It depends on thiamine diphosphate as a cofactor.

The protein resides in the mitochondrion matrix. The catalysed reaction is N(6)-[(R)-lipoyl]-L-lysyl-[protein] + 3-methyl-2-oxobutanoate + H(+) = N(6)-[(R)-S(8)-2-methylpropanoyldihydrolipoyl]-L-lysyl-[protein] + CO2. Its function is as follows. The branched-chain alpha-keto dehydrogenase complex catalyzes the overall conversion of alpha-keto acids to acyl-CoA and CO(2). It contains multiple copies of three enzymatic components: branched-chain alpha-keto acid decarboxylase (E1), lipoamide acyltransferase (E2) and lipoamide dehydrogenase (E3). The sequence is that of 2-oxoisovalerate dehydrogenase subunit beta, mitochondrial (bkdB) from Dictyostelium discoideum (Social amoeba).